A 130-amino-acid chain; its full sequence is uncharacterized protein (130 aa).

Residues 1–26 form the signal peptide; the sequence is MKFIYKLLFILSIVLFLFNNIITING. N-linked (GlcNAc...) asparagine glycosylation is present at Asn-88.

The protein localises to the secreted. This is an uncharacterized protein from Dictyostelium discoideum (Social amoeba).